Reading from the N-terminus, the 149-residue chain is Calmodulin-5/6/7/8 (149 aa).

An N-acetylalanine modification is found at Ala-2. EF-hand domains follow at residues 8-43 (DQIS…LGQN), 44-79 (PTEA…KMKD), 81-116 (DSEE…LGEK), and 117-149 (LTDE…MMAK). Ca(2+) is bound by residues Asp-21, Asp-23, Asp-25, Cys-27, Glu-32, Asp-57, Asp-59, Asn-61, Thr-63, Glu-68, Asp-94, Asp-96, Asn-98, and Glu-105. Lys-116 is modified (N6,N6,N6-trimethyllysine). Residues Asp-130, Asp-132, Asp-134, Gln-136, and Glu-141 each contribute to the Ca(2+) site.

Belongs to the calmodulin family. As to expression, high expression of PCM5 and 8 in stolon tips and stems, moderate in roots, and low in leaves. Steady-state expression of PCM6 in all the tissues tested, except in the leaves where the expression is lower.

Its function is as follows. Calmodulin mediates the control of a large number of enzymes, ion channels and other proteins by Ca(2+). Among the enzymes to be stimulated by the calmodulin-Ca(2+) complex are a number of protein kinases and phosphatases. The sequence is that of Calmodulin-5/6/7/8 (PCM5) from Solanum tuberosum (Potato).